A 114-amino-acid chain; its full sequence is Protein U68 (114 aa).

The protein belongs to the herpesviridae UL96 family.

This Human herpesvirus 6A (strain Uganda-1102) (HHV-6 variant A) protein is Protein U68 (U68).